The following is a 144-amino-acid chain: Large ribosomal subunit protein uL15 (144 aa).

Positions 1–18 (MRLNDLHPAEGSRPEGKR) are enriched in basic and acidic residues. Residues 1 to 58 (MRLNDLHPAEGSRPEGKRVGRGIGSGLGKTGGRGHKGQKSRSGGSVKPGFEGGQMPLQ) are disordered. Gly residues predominate over residues 21 to 31 (RGIGSGLGKTG).

The protein belongs to the universal ribosomal protein uL15 family. In terms of assembly, part of the 50S ribosomal subunit.

In terms of biological role, binds to the 23S rRNA. This Alcanivorax borkumensis (strain ATCC 700651 / DSM 11573 / NCIMB 13689 / SK2) protein is Large ribosomal subunit protein uL15.